The sequence spans 206 residues: Thiamine-phosphate synthase (206 aa).

4-amino-2-methyl-5-(diphosphooxymethyl)pyrimidine contacts are provided by residues 33–37 (QMRFK) and asparagine 65. Aspartate 66 and aspartate 85 together coordinate Mg(2+). Threonine 104 is a binding site for 4-amino-2-methyl-5-(diphosphooxymethyl)pyrimidine. 130–132 (TAT) is a binding site for 2-[(2R,5Z)-2-carboxy-4-methylthiazol-5(2H)-ylidene]ethyl phosphate. Residue lysine 133 coordinates 4-amino-2-methyl-5-(diphosphooxymethyl)pyrimidine. Glycine 166 provides a ligand contact to 2-[(2R,5Z)-2-carboxy-4-methylthiazol-5(2H)-ylidene]ethyl phosphate.

It belongs to the thiamine-phosphate synthase family. Mg(2+) serves as cofactor.

It carries out the reaction 2-[(2R,5Z)-2-carboxy-4-methylthiazol-5(2H)-ylidene]ethyl phosphate + 4-amino-2-methyl-5-(diphosphooxymethyl)pyrimidine + 2 H(+) = thiamine phosphate + CO2 + diphosphate. The catalysed reaction is 2-(2-carboxy-4-methylthiazol-5-yl)ethyl phosphate + 4-amino-2-methyl-5-(diphosphooxymethyl)pyrimidine + 2 H(+) = thiamine phosphate + CO2 + diphosphate. It catalyses the reaction 4-methyl-5-(2-phosphooxyethyl)-thiazole + 4-amino-2-methyl-5-(diphosphooxymethyl)pyrimidine + H(+) = thiamine phosphate + diphosphate. It functions in the pathway cofactor biosynthesis; thiamine diphosphate biosynthesis; thiamine phosphate from 4-amino-2-methyl-5-diphosphomethylpyrimidine and 4-methyl-5-(2-phosphoethyl)-thiazole: step 1/1. Functionally, condenses 4-methyl-5-(beta-hydroxyethyl)thiazole monophosphate (THZ-P) and 2-methyl-4-amino-5-hydroxymethyl pyrimidine pyrophosphate (HMP-PP) to form thiamine monophosphate (TMP). The chain is Thiamine-phosphate synthase from Flavobacterium psychrophilum (strain ATCC 49511 / DSM 21280 / CIP 103535 / JIP02/86).